A 454-amino-acid chain; its full sequence is SPSSPTVFPLVSCESPLSDENLVAMGCLARDFLPSSISFSWNYQNKSEVNQGVRTFPTLRMGEKYAATSQVFLPPKSVLEGSDEYLVCKVHHGNTNKDLRVPIPVVTEMNPNVSVFVPSRDAFSGPAPRKSRLFCEASNFSPKQITVSWLRDGKPVKSGFTTEPVTPEDRGSGPRTYKVISTLTITESDWLNLSVYTCRVDHRGLTFWKNVSSTCAASPSTDIQAFPIPPSFVGIFLNKSATLTCLVTNLATYDTLNISWSSRSGEPLETKTKLTESHPNGTFSAIGEANVCVEDWDSGKEFVCTVTHRDLPSPQKKFISKPREMNKTPPAVYQQPLAREQLILRESATVTCLVKGFSPADIFVQWLQRGQPLSQDKYVTSAPMREPQAPHLYFTHSVLTVTEEEWNSGETYTCVVGHEALPHMVTERTVDRSTGKPTLYNVSLIMSDAGGTCY.

The interval 1–105 is CH1; the sequence is SPSSPTVFPL…NKDLRVPIPV (105 aa). Cys-27 and Cys-88 are disulfide-bonded. N-linked (GlcNAc...) asparagine glycans are attached at residues Asn-45, Asn-112, Asn-192, Asn-210, Asn-238, Asn-257, and Asn-280. The segment at 106–218 is CH2; that stretch reads VTEMNPNVSV…KNVSSTCAAS (113 aa). The cysteines at positions 135 and 198 are disulfide-linked. Positions 219-324 are CH3; it reads PSTDIQAFPI…QKKFISKPRE (106 aa). Cystine bridges form between Cys-245–Cys-304 and Cys-352–Cys-414. The interval 325 to 454 is CH4; it reads MNKTPPAVYQ…IMSDAGGTCY (130 aa). Asn-441 is a glycosylation site (N-linked (GlcNAc...) asparagine).

The sequence is that of Ig mu chain C region from Mesocricetus auratus (Golden hamster).